A 369-amino-acid chain; its full sequence is tRNA-specific 2-thiouridylase MnmA (369 aa).

ATP is bound by residues 10–17 (GLSGGVDS) and Leu-36. Cys-97 acts as the Nucleophile in catalysis. Cys-97 and Cys-196 are oxidised to a cystine. Gly-122 is an ATP binding site. An interaction with tRNA region spans residues 146-148 (KDQ). Cys-196 serves as the catalytic Cysteine persulfide intermediate. Positions 301–302 (RY) are interaction with tRNA.

This sequence belongs to the MnmA/TRMU family.

It localises to the cytoplasm. The enzyme catalyses S-sulfanyl-L-cysteinyl-[protein] + uridine(34) in tRNA + AH2 + ATP = 2-thiouridine(34) in tRNA + L-cysteinyl-[protein] + A + AMP + diphosphate + H(+). Its function is as follows. Catalyzes the 2-thiolation of uridine at the wobble position (U34) of tRNA, leading to the formation of s(2)U34. The protein is tRNA-specific 2-thiouridylase MnmA of Thermosynechococcus vestitus (strain NIES-2133 / IAM M-273 / BP-1).